A 610-amino-acid polypeptide reads, in one-letter code: Elongation factor 4 (610 aa).

A tr-type G domain is found at 11–193 (EKIRNFSIIA…QIVEKVPAPT (183 aa)). GTP-binding positions include 23–28 (DHGKST) and 140–143 (NKID).

This sequence belongs to the TRAFAC class translation factor GTPase superfamily. Classic translation factor GTPase family. LepA subfamily.

Its subcellular location is the cell membrane. The enzyme catalyses GTP + H2O = GDP + phosphate + H(+). Functionally, required for accurate and efficient protein synthesis under certain stress conditions. May act as a fidelity factor of the translation reaction, by catalyzing a one-codon backward translocation of tRNAs on improperly translocated ribosomes. Back-translocation proceeds from a post-translocation (POST) complex to a pre-translocation (PRE) complex, thus giving elongation factor G a second chance to translocate the tRNAs correctly. Binds to ribosomes in a GTP-dependent manner. This is Elongation factor 4 from Streptococcus pyogenes serotype M2 (strain MGAS10270).